A 3933-amino-acid chain; its full sequence is Circularly permutated Ras protein 2 (3933 aa).

A coiled-coil region spans residues 12–46 (VHEVKKQELESILLQQEQEKQAKEEKESIKDTDDK). Disordered stretches follow at residues 23-101 (ILLQ…IEKK), 136-189 (DIRE…RKET), 1022-1054 (ITTT…TTTT), and 2817-2839 (NNNN…RPTR). A compositionally biased stretch (basic and acidic residues) spans 28 to 62 (EQEKQAKEEKESIKDTDDKPIEDTEHSTNNDKPIE). Low complexity predominate over residues 70-92 (TPTTTTTTKPTDEASSSSNNNNN). Positions 136–145 (DIREPTDKPF) are enriched in basic and acidic residues. Over residues 146–156 (ENTSNIETTRQ) the composition is skewed to polar residues. Positions 167 to 215 (KTEAERLEQEQKQKQYDENRKETDRKLELELERLKNKKEEVEQIRAYFQ) form a coiled coil. Basic and acidic residues predominate over residues 168–189 (TEAERLEQEQKQKQYDENRKET). Residues 2817 to 2826 (NNNNNNNRYN) are compositionally biased toward low complexity. GTP is bound by residues 2853-2857 (DTAGQ), 2913-2916 (TKAD), and 2976-2983 (GDGGIGKS). 3 disordered regions span residues 3036–3086 (LQSA…LSSR), 3107–3142 (RKSS…QDYE), and 3733–3754 (VIEP…PSSS). Positions 3070 to 3086 (PSSSSTRTSVSTSLSSR) are enriched in low complexity. The segment covering 3107-3120 (RKSSLVEEESKRQY) has biased composition (basic and acidic residues). Acidic residues predominate over residues 3121 to 3141 (DDDDESKSESSEYDDDDDQDY).

It belongs to the small GTPase superfamily. CpRas family.

This Dictyostelium discoideum (Social amoeba) protein is Circularly permutated Ras protein 2 (cpras2).